The following is a 576-amino-acid chain: Depolymerase 2, capsule K21-specific (576 aa).

The tract at residues 34 to 360 (SFSGSTATDK…QSNGNVSVGQ (327 aa)) is catalytic. Active-site residues include Glu-170, Asp-229, Glu-239, and Asp-241. Residues 380-487 (PSEYDADGET…LADGMVFGKV (108 aa)) form a carbohydrate binding region. The interval 488 to 576 (DYIDWDFAIA…TRCRVRAFVS (89 aa)) is lectin-like.

The protein in the N-terminal section; belongs to the Przondovirus depolymerase 2 family. In the C-terminal section; belongs to the K21-specific depolymerase family. In terms of assembly, homotrimer. The 3 parallel chains are tightly packed together to form an elongated structure of approximately 7 x 12 nm. Interacts (via N-terminus) with depolymerase 1 (via N-terminus); this interaction probably gives rise to a branched tailspike.

It localises to the virion. Functionally, functions as a receptor binding protein (RBP) and probably mediates the attachment to the host capsular exopolysaccharides. Displays a depolymerase activity that specifically degrades the K21-type polysaccharides Klebsiella pneumoniae capsule, which allows the phage to reach the host cell membrane and bind the entry receptor. This chain is Depolymerase 2, capsule K21-specific, found in Klebsiella phage KP32 (Bacteriophage KP32).